The following is a 757-amino-acid chain: RNA-directed RNA polymerase catalytic subunit (757 aa).

The disordered stretch occupies residues 56-78 (TTNTETGAHQLNPIDGPLPEDNE). 2 short sequence motifs (nuclear localization signal) span residues 187–195 (RKRRVRDNM) and 203–216 (RTIGKKKQRLNKRS). The promoter-binding site stretch occupies residues 249-256 (RGFVYFVE). Residues 286-483 (VRKMMTNSQD…GINMSKKKSY (198 aa)) form the RdRp catalytic domain.

Belongs to the influenza viruses polymerase PB1 family. As to quaternary structure, influenza RNA polymerase is composed of three subunits: PB1, PB2 and PA. Interacts (via N-terminus) with PA (via C-terminus). Interacts (via C-terminus) with PB2 (via N-terminus); this interaction is essential for transcription initiation. In terms of processing, phosphorylated by host PRKCA.

Its subcellular location is the host nucleus. It localises to the host cytoplasm. It catalyses the reaction RNA(n) + a ribonucleoside 5'-triphosphate = RNA(n+1) + diphosphate. Its function is as follows. RNA-dependent RNA polymerase which is responsible for replication and transcription of virus RNA segments. The transcription of viral mRNAs occurs by a unique mechanism called cap-snatching. 5' methylated caps of cellular mRNAs are cleaved after 10-13 nucleotides by PA. In turn, these short capped RNAs are used as primers by PB1 for transcription of viral mRNAs. During virus replication, PB1 initiates RNA synthesis and copy vRNA into complementary RNA (cRNA) which in turn serves as a template for the production of more vRNAs. In Aves (Human), this protein is RNA-directed RNA polymerase catalytic subunit.